The primary structure comprises 357 residues: MSRPTRLVIEPSALLHNLSQIKHLAPGKKVIAMVKANAYGCGVREVAPVLDGRIEAFGVACLEEALAIRALGVETPCILFQGVFSSDELSVAVENDFACVLHHAQQLEWLIKTPLPYPIKVWVKVNTGMHRLGFKIHELQKVMGALQTCTWVDKSIGLMTHLACADEPHRPENQQQISLFQEISIPGFRQRSIANSAAIISFPDSQADVVRPGIMLYGVSPFANQNAHDLGLIPVMRFMSAISAIHDNPSFAQVGYGGTWKSDKPSRIGVVAAGYGDGYPRHISEKTPVWVRGREVSIVGRVSMDMLTIDLTEHPDVEIGDEVELWGTHVLVERIAKSAGTVGYELLCQISERVRYK.

Catalysis depends on lysine 35, which acts as the Proton acceptor; specific for D-alanine. The residue at position 35 (lysine 35) is an N6-(pyridoxal phosphate)lysine. Arginine 131 is a binding site for substrate. Tyrosine 256 functions as the Proton acceptor; specific for L-alanine in the catalytic mechanism. Methionine 304 provides a ligand contact to substrate.

It belongs to the alanine racemase family. Pyridoxal 5'-phosphate is required as a cofactor.

The catalysed reaction is L-alanine = D-alanine. It participates in amino-acid biosynthesis; D-alanine biosynthesis; D-alanine from L-alanine: step 1/1. Its function is as follows. Catalyzes the interconversion of L-alanine and D-alanine. May also act on other amino acids. The chain is Alanine racemase (alr) from Legionella pneumophila (strain Corby).